A 900-amino-acid polypeptide reads, in one-letter code: Sterol regulatory element-binding protein 1 (900 aa).

Positions 1 to 16 are enriched in low complexity; it reads MQSSIPSVSVSVASPA. Disordered stretches follow at residues 1-49 and 206-263; these read MQSS…TKAS and TTCK…PKKT. Positions 1–440 are nuclear form of sre1; complements deletions of sre1 or scp1; the sequence is MQSSIPSVSV…FALPPFLMSP (440 aa). At 1-442 the chain is on the cytoplasmic side; that stretch reads MQSSIPSVSV…LPPFLMSPFT (442 aa). The span at 21–32 shows a compositional bias: polar residues; sequence TKASPDSKSPNS. The segment covering 35-49 has biased composition (low complexity); sequence AIPSSSPLASSTKAS. Positions 260–332 constitute a bHLH domain; that stretch reads PKKTAHNMIE…AKATEYIRHL (73 aa). Residues 443–463 traverse the membrane as a helical segment; that stretch reads GTVLFNMLKIGVVLLGLFYLL. Topologically, residues 464 to 509 are lumenal; it reads HDNSLFKGFKGEKKSKVSTRSSMSPSSILFRKTVFEKYCLLDHSTS. The helical transmembrane segment at 510 to 530 threads the bilayer; sequence TISLFFGLLIFTLKSAYGYLT. Residues 531–900 lie on the Cytoplasmic side of the membrane; that stretch reads HRLSALYTSS…QEDLGYVSSA (370 aa). A phosphoserine mark is found at Ser-898 and Ser-899.

Forms a tight complex with scp1, composed of 4 copies of scp1 and 4 copies of sre1, which protects sre1 precursor from degradation by the proteasome. In terms of processing, in low oxygen or sterol conditions, undergoes proteolytic cleavage by rhomboid-type protease rbd2 and is released as soluble transcription factor from the membrane. Post-translationally, processed form is phosphorylated.

It localises to the endoplasmic reticulum membrane. It is found in the nucleus. Precursor of the transcription factor form (Processed sterol regulatory element-binding protein 1), which is embedded in the endoplasmic reticulum membrane. Low oxygen or sterol conditions promote processing of this form, releasing the transcription factor form that translocates into the nucleus and activates transcription of genes required for adaptation to anaerobic growth. Functionally, transcriptional activator required for transcription of genes required for adaptation to anaerobic growth like those implicated in the nonrespiratory oxygen-consumptive biosynthetic pathways of sterol, heme, sphingolipid, and ubiquinone biosynthesis. May monitor oxygen levels through sterol synthesis steps which require oxygen. This is Sterol regulatory element-binding protein 1 from Schizosaccharomyces pombe (strain 972 / ATCC 24843) (Fission yeast).